Reading from the N-terminus, the 192-residue chain is Glycerol-3-phosphate acyltransferase (192 aa).

The next 5 membrane-spanning stretches (helical) occupy residues 5–25 (VVLI…ITRI), 50–70 (FLAA…VYIA), 78–98 (DFYI…PIWL), 112–132 (ILIA…IIVF), and 153–173 (SFFF…LVFL).

It belongs to the PlsY family. As to quaternary structure, probably interacts with PlsX.

The protein localises to the cell membrane. The catalysed reaction is an acyl phosphate + sn-glycerol 3-phosphate = a 1-acyl-sn-glycero-3-phosphate + phosphate. It participates in lipid metabolism; phospholipid metabolism. Functionally, catalyzes the transfer of an acyl group from acyl-phosphate (acyl-PO(4)) to glycerol-3-phosphate (G3P) to form lysophosphatidic acid (LPA). This enzyme utilizes acyl-phosphate as fatty acyl donor, but not acyl-CoA or acyl-ACP. The sequence is that of Glycerol-3-phosphate acyltransferase from Wolbachia pipientis wMel.